Consider the following 427-residue polypeptide: NAD kinase 2, mitochondrial (427 aa).

The transit peptide at 1-33 directs the protein to the mitochondrion; the sequence is MSLCLRLLCSVCGAAALRVPLGVSSLRALSGSA.

The protein belongs to the NAD kinase family. As to quaternary structure, homodimer.

Its subcellular location is the mitochondrion. It catalyses the reaction NAD(+) + ATP = ADP + NADP(+) + H(+). In terms of biological role, mitochondrial NAD(+) kinase that phosphorylates NAD(+) to yield NADP(+). Can use both ATP or inorganic polyphosphate as the phosphoryl donor. This is NAD kinase 2, mitochondrial (nadk2) from Xenopus tropicalis (Western clawed frog).